The chain runs to 413 residues: MQIYMVGGAVRDRLLGRPVHDRDWVVVGATPEQMRAQGYLPVGRDFPVFLHPATREEYALARTERKSGRGYRGFVVHSAPEVTLQEDLSRRDLTINAIATSADASGAGCLIDPHHGARDIAARVLRHVSTAFREDPVRILRVARFAARLPDFTVAPETLQLMREMVAHGETDHLVAERVWQELARGLMAEKPSRMFEVLRACGALERLLPEVERLWGVPQSAEHHPEIDTGAHLLLVLDMAARLQAPLAVRFACLAHDLGKGSTPADMLPRHIGHETRGAELLKHLAERLRVPADCRATADKVAREHGHIHCSNALSAAALVRLLERCDALRLPQRFADILLACECDARGRLGFAESAYPQRPRLTAALAAAQSVHSSAIAAQAAARGLAGPQVGALIRQARVAAVAQWLASQ.

ATP is bound by residues Gly8 and Arg11. 2 residues coordinate CTP: Gly8 and Arg11. Residues Asp21 and Asp23 each coordinate Mg(2+). 3 residues coordinate ATP: Arg91, Arg141, and Arg144. Residues Arg91, Arg141, and Arg144 each coordinate CTP. Positions 230–331 constitute an HD domain; it reads TGAHLLLVLD…VRLLERCDAL (102 aa).

The protein belongs to the tRNA nucleotidyltransferase/poly(A) polymerase family. Bacterial CCA-adding enzyme type 1 subfamily. Monomer. Can also form homodimers and oligomers. It depends on Mg(2+) as a cofactor. Ni(2+) is required as a cofactor.

It carries out the reaction a tRNA precursor + 2 CTP + ATP = a tRNA with a 3' CCA end + 3 diphosphate. The catalysed reaction is a tRNA with a 3' CCA end + 2 CTP + ATP = a tRNA with a 3' CCACCA end + 3 diphosphate. Catalyzes the addition and repair of the essential 3'-terminal CCA sequence in tRNAs without using a nucleic acid template. Adds these three nucleotides in the order of C, C, and A to the tRNA nucleotide-73, using CTP and ATP as substrates and producing inorganic pyrophosphate. tRNA 3'-terminal CCA addition is required both for tRNA processing and repair. Also involved in tRNA surveillance by mediating tandem CCA addition to generate a CCACCA at the 3' terminus of unstable tRNAs. While stable tRNAs receive only 3'-terminal CCA, unstable tRNAs are marked with CCACCA and rapidly degraded. This Verminephrobacter eiseniae (strain EF01-2) protein is Multifunctional CCA protein.